The following is a 565-amino-acid chain: Sulfite reductase [NADPH] hemoprotein beta-component (565 aa).

Residues Cys-429, Cys-435, Cys-474, and Cys-478 each coordinate [4Fe-4S] cluster. Cys-478 contributes to the siroheme binding site.

This sequence belongs to the nitrite and sulfite reductase 4Fe-4S domain family. Alpha(8)-beta(8). The alpha component is a flavoprotein, the beta component is a hemoprotein. Siroheme is required as a cofactor. It depends on [4Fe-4S] cluster as a cofactor.

The catalysed reaction is hydrogen sulfide + 3 NADP(+) + 3 H2O = sulfite + 3 NADPH + 4 H(+). It participates in sulfur metabolism; hydrogen sulfide biosynthesis; hydrogen sulfide from sulfite (NADPH route): step 1/1. In terms of biological role, component of the sulfite reductase complex that catalyzes the 6-electron reduction of sulfite to sulfide. This is one of several activities required for the biosynthesis of L-cysteine from sulfate. The polypeptide is Sulfite reductase [NADPH] hemoprotein beta-component (Shewanella sp. (strain W3-18-1)).